The primary structure comprises 429 residues: MQLLAVGLNHTTAPVSLREKVAFPADQLGQAVASARSWYGRSDATTYTDEAAILSTCNRTELYAASNLPGGVNEAIDITAHFLADYHKLPYAELRPYLYALPQDNAVRHAFRVASGLDSMVLGEPQILGQMKDAVRQAEAAGGLGTYLHQMFQRTFAVAKEVRSTTEIGAHSVSMAAASVRLSQRIFDKISEQNVLFIGAGEMIELSATHFAAQNPKSVTIANRTLERGQTLAHRFNGKAIRLADLPDQLASYDIVISSTASSLPIIGLGMVERAIKARRHKPMFMVDLAVPRDIEAEIGRLDDVFLYTVDDLGSFVQTGVENRQAAVAQAEAIIETRVRSFMHWIDARAVVPVIQDLHESSETMRMIELERARKLLAKGEDIDAVLEALSKGLTAKFLHGPQQALNNAQGDERARLAALLPQLFRTKR.

Substrate contacts are provided by residues 56-59 (TCNR), Ser119, 124-126 (EPQ), and Gln130. The active-site Nucleophile is the Cys57. 199 to 204 (GAGEMI) serves as a coordination point for NADP(+).

It belongs to the glutamyl-tRNA reductase family. As to quaternary structure, homodimer.

The enzyme catalyses (S)-4-amino-5-oxopentanoate + tRNA(Glu) + NADP(+) = L-glutamyl-tRNA(Glu) + NADPH + H(+). It participates in porphyrin-containing compound metabolism; protoporphyrin-IX biosynthesis; 5-aminolevulinate from L-glutamyl-tRNA(Glu): step 1/2. Functionally, catalyzes the NADPH-dependent reduction of glutamyl-tRNA(Glu) to glutamate 1-semialdehyde (GSA). The polypeptide is Glutamyl-tRNA reductase (Janthinobacterium sp. (strain Marseille) (Minibacterium massiliensis)).